The sequence spans 502 residues: Activin receptor type-1-like (502 aa).

An N-terminal signal peptide occupies residues methionine 1–glycine 22. The Extracellular portion of the chain corresponds to aspartate 23 to proline 119. Asparagine 32 carries N-linked (GlcNAc...) asparagine glycosylation. Cystine bridges form between cysteine 33/cysteine 50, cysteine 35/cysteine 40, and cysteine 45/cysteine 68. Residues asparagine 72 to leucine 75 are mediates specificity for BMP ligand. 2 cysteine pairs are disulfide-bonded: cysteine 76–cysteine 88 and cysteine 89–cysteine 94. Asparagine 97 is a glycosylation site (N-linked (GlcNAc...) asparagine). Residues leucine 120–tryptophan 140 traverse the membrane as a helical segment. Residues arginine 141–histidine 502 are Cytoplasmic-facing. Residues serine 154, serine 159, and serine 160 each carry the phosphoserine modification. The 30-residue stretch at serine 171 to glutamine 200 folds into the GS domain. The region spanning valine 201–histidine 502 is the Protein kinase domain. ATP-binding positions include valine 207–valine 215 and lysine 228. Aspartate 329 acts as the Proton acceptor in catalysis.

The protein belongs to the protein kinase superfamily. TKL Ser/Thr protein kinase family. TGFB receptor subfamily. Interacts with TSC22D1/TSC-22. It depends on Mg(2+) as a cofactor. Mn(2+) is required as a cofactor.

It is found in the cell membrane. It catalyses the reaction L-threonyl-[receptor-protein] + ATP = O-phospho-L-threonyl-[receptor-protein] + ADP + H(+). The enzyme catalyses L-seryl-[receptor-protein] + ATP = O-phospho-L-seryl-[receptor-protein] + ADP + H(+). Type I receptor for TGF-beta family ligands BMP9/GDF2 and BMP10 and important regulator of normal blood vessel development. On ligand binding, forms a receptor complex consisting of two type II and two type I transmembrane serine/threonine kinases. Type II receptors phosphorylate and activate type I receptors which autophosphorylate, then bind and activate SMAD transcriptional regulators. May bind activin as well. This Mus musculus (Mouse) protein is Activin receptor type-1-like (Acvrl1).